The sequence spans 313 residues: Formimidoylglutamase (313 aa).

H130, D155, H157, D159, D241, and D243 together coordinate Mn(2+).

Belongs to the arginase family. Requires Mn(2+) as cofactor.

It carries out the reaction N-formimidoyl-L-glutamate + H2O = formamide + L-glutamate. It functions in the pathway amino-acid degradation; L-histidine degradation into L-glutamate; L-glutamate from N-formimidoyl-L-glutamate (hydrolase route): step 1/1. In terms of biological role, catalyzes the conversion of N-formimidoyl-L-glutamate to L-glutamate and formamide. This Salmonella choleraesuis (strain SC-B67) protein is Formimidoylglutamase.